A 1279-amino-acid polypeptide reads, in one-letter code: Talin-A (1279 aa).

One can recognise an FERM domain in the interval 84 to 365; sequence RPQKFKLLDG…GYIEIIMKAR (282 aa).

It localises to the cytoplasm. Its subcellular location is the cytoskeleton. The protein localises to the cell cortex. Functionally, actin-binding protein that may be involved in the control of cell motility and chemotaxis. The sequence is that of Talin-A (talA) from Dictyostelium discoideum (Social amoeba).